The primary structure comprises 226 residues: UPF0758 protein SAK_1186 (226 aa).

The MPN domain maps to 103–225; that stretch reads QILSSEQLAR…YYSFREEADI (123 aa). Zn(2+) is bound by residues His-174, His-176, and Asp-187. A JAMM motif motif is present at residues 174–187; the sequence is HNHPSGSPKPSESD.

Belongs to the UPF0758 family.

The polypeptide is UPF0758 protein SAK_1186 (Streptococcus agalactiae serotype Ia (strain ATCC 27591 / A909 / CDC SS700)).